The sequence spans 1676 residues: MITIAPMLFSVLRAYDLACINTAGPLIILGIYYGFLITLPIAPSQLVCIRAFLLEGEGKESESPGTVAKSGILIAAISGLTVSQLAFFLSIYWPPLYMIWLKPHLLTLLVLPYMFFYWSRIQEFESSGWLKTEQSKIYDPRVRAAFLDSFLFQALNPVLLPSPVMTRLMSVFLFRYSQVSLFILGTAIGWLGGQIMFVLLSWCLLLRLERDLPTIYVIVRRLVHNIFPPIVFGLCLAYMGRAPVSFFRKQTDIQQMPEIRPTELWPSVAFDTTLWKRPFRLPKKDMLDNFPPLYNNKKRFSQYLFEVCVSEGKRRLSYTYPQSLLAFQSHLEDCLDVTYVSQQTDNDIYHEWATSKQNRKDQISNILLKQMEALDNGAPIETVIENKIASLTTIEQPVRKRLDPRLAKYMRYNTLSNKTESPWIQGESSVLEDTSLELQSKPNLFHLTENNYLREWISIKSEQMINTLILPWQSLEHDSDAALLTLLNNSPETNINKEQLYTWESLLHAYKLNPKVDIYKTMPGHKKLLYYLTKQPVTKLLTQIFHMDQRVDSSDIKTLLDYYKPLPVWYAQRHFTTTDIRQPRISKRLKSFDFVRRLITGSLRARRRNTLIWNALQIKPETPFLLRVHNVSKQEDMSIKQAISVTTQQTNLYASETAKRFNFRLAHMVRSPALVIQSWFRKYVKQPILILFKNVGRLLLLQKTEWSEDIGDWAREVYIYYSYDGKQYSITERPKKWYYTGLQIRILFPFHLRPWHPSNATADGKDKINLQLQSDFDLVNNNNSILEHSSYLTVWGSETEVAFGNVKKKPSFWKPTFKAIRLVLSRKLNKQFVKIGNMFQPVYKLVQTPLSSKFVNQTMFAQEEPSVSDNMKHNTIEQPINSIDNKNLFFLNHNKDNKATKNVLSIEKSSLILSDNRASQDSLVLSSDSNKLYTNEHKLENTSKQLLVIKSEHTKPLQQPIMLFRIKPILEANTIIKHSLIGRPPMQTNQKSVDNFQVQLLSKESSISIRYKLTQFNSLLVQFQRTWIYIKQNIQNIIVELFKFIQLQFTETRMTILHLIQQLMQLVSSQVITGFRTISSGIDHLFDSYYIWRMKHFTAKHLQNVYETTPIDSSSITQAYILNKIWQSIIESTPNLSWVTQQWTSENRLQDYLQTQLVDQGILNCQEPNKLTQANWNKWLEFFPQYIPSSNIWLNVIPNRYRSEVNLYWKYCDNIDYKNKHPIVSINAHNKIQQSNGLRYHTPLLQKLEKLSKRWKMYNLYRRYTSFVNNINTNRFPTEPILSNELNQLNYVNENIVHNSVNKTEETISYREPIEWGFTRTRLGRFSPYLTLSQSHSNNSIDDIDTEDIETLGLFAILQTYKEFNKKTNFTSSSVDHKLHKQESSAAPKIDHKLDSQLVSTNLIQRTCFEPMYASKLKSKLLKERFKNLLNAARLSILATKSGVTTDTTTFLSSNMQRDLSILTEDLNTHKDINEGIEISEETKQDAYSKAMRNSVLFKQNLQNWRLKIMDDQIFMYNMVSPILRLSNREHNDYILNLCNCLLGELSSNLVESIVALTPEDILLPTSSRELRVLDCLDLTAGPNDYQSVSNNTLIQNKTNSIAVTDQILQNKSKLSYSNFVSNIQQKSKPSYIIKRFLWPTYRLEDLACMNRFWLSSGNQSRFSALRISMYPSMLE.

6 helical membrane passes run 23-43, 71-91, 96-116, 145-165, 179-199, and 226-246; these read AGPL…PIAP, GILI…FLSI, LYMI…YMFF, AFLD…SPVM, VSLF…MFVL, and IFPP…PVSF.

The protein belongs to the TIC214 family. Part of the Tic complex.

It is found in the plastid. Its subcellular location is the chloroplast inner membrane. In terms of biological role, involved in protein precursor import into chloroplasts. May be part of an intermediate translocation complex acting as a protein-conducting channel at the inner envelope. The sequence is that of Protein TIC 214 from Zygnema circumcarinatum (Green alga).